The primary structure comprises 585 residues: Glutamine--tRNA ligase (585 aa).

The short motif at 51–61 (PEPNGYLHIGH) is the 'HIGH' region element. ATP contacts are provided by residues 52 to 54 (EPN) and 58 to 64 (HIGHAKS). Residues Asp84 and Tyr238 each contribute to the L-glutamine site. Residues Thr257 and 292–293 (RL) contribute to the ATP site. The 'KMSKS' region motif lies at 299–303 (ITSKR).

The protein belongs to the class-I aminoacyl-tRNA synthetase family. In terms of assembly, monomer.

It localises to the cytoplasm. It carries out the reaction tRNA(Gln) + L-glutamine + ATP = L-glutaminyl-tRNA(Gln) + AMP + diphosphate. The chain is Glutamine--tRNA ligase from Cupriavidus necator (strain ATCC 17699 / DSM 428 / KCTC 22496 / NCIMB 10442 / H16 / Stanier 337) (Ralstonia eutropha).